Consider the following 313-residue polypeptide: Ribosomal RNA small subunit methyltransferase H (313 aa).

S-adenosyl-L-methionine contacts are provided by residues 35–37 (GGH), D55, F81, D103, and Q110.

This sequence belongs to the methyltransferase superfamily. RsmH family.

It localises to the cytoplasm. It carries out the reaction cytidine(1402) in 16S rRNA + S-adenosyl-L-methionine = N(4)-methylcytidine(1402) in 16S rRNA + S-adenosyl-L-homocysteine + H(+). In terms of biological role, specifically methylates the N4 position of cytidine in position 1402 (C1402) of 16S rRNA. The polypeptide is Ribosomal RNA small subunit methyltransferase H (Pseudomonas aeruginosa (strain LESB58)).